A 506-amino-acid chain; its full sequence is Maturase K (506 aa).

Belongs to the intron maturase 2 family. MatK subfamily.

Its subcellular location is the plastid. It localises to the chloroplast. Functionally, usually encoded in the trnK tRNA gene intron. Probably assists in splicing its own and other chloroplast group II introns. This Arctostaphylos uva-ursi (Bearberry) protein is Maturase K.